The chain runs to 747 residues: Histone-lysine N-methyltransferase EZH1 (747 aa).

The segment at 186 to 229 is disordered; the sequence is YSDEDEEGHNDTSDGKQDDSKEDLPVTRKRKRHAIEGSKKSSKK. A compositionally biased stretch (basic and acidic residues) spans 194–211; it reads HNDTSDGKQDDSKEDLPV. Residue Lys-327 forms a Glycyl lysine isopeptide (Lys-Gly) (interchain with G-Cter in SUMO2) linkage. A disordered region spans residues 375–421; the sequence is TSASAVAETKEGDSDRDTGNDWASSSSEANSRCQTPTKQKASPAPPQ. The segment covering 382 to 393 has biased composition (basic and acidic residues); it reads ETKEGDSDRDTG. Over residues 395-414 the composition is skewed to polar residues; that stretch reads DWASSSSEANSRCQTPTKQK. The CXC domain maps to 504-606; it reads CRKIQLKKDN…CKVVSCKNCS (103 aa). Positions 613–728 constitute an SET domain; the sequence is KHLLLAPSDV…AGEELFFDYR (116 aa).

The protein belongs to the class V-like SAM-binding methyltransferase superfamily. Histone-lysine methyltransferase family. EZ subfamily. Component of the PRC2/EED-EZH1 complex, which includes EED, EZH1, SUZ12, RBBP4 and AEBP2. The PRC2/EED-EZH1 is less abundant than the PRC2/EED-EZH2 complex, has weak methyltransferase activity and compacts chromatin in the absence of the methyltransferase cofactor S-adenosyl-L-methionine (SAM). Interacts with EZHIP; the interaction blocks EZH1 methyltransferase activity.

Its subcellular location is the nucleus. The catalysed reaction is L-lysyl(27)-[histone H3] + 3 S-adenosyl-L-methionine = N(6),N(6),N(6)-trimethyl-L-lysyl(27)-[histone H3] + 3 S-adenosyl-L-homocysteine + 3 H(+). Functionally, polycomb group (PcG) protein. Catalytic subunit of the PRC2/EED-EZH1 complex, which methylates 'Lys-27' of histone H3, leading to transcriptional repression of the affected target gene. Able to mono-, di- and trimethylate 'Lys-27' of histone H3 to form H3K27me1, H3K27me2 and H3K27me3, respectively. Required for embryonic stem cell derivation and self-renewal, suggesting that it is involved in safeguarding embryonic stem cell identity. Compared to EZH2-containing complexes, it is less abundant in embryonic stem cells, has weak methyltransferase activity and plays a less critical role in forming H3K27me3, which is required for embryonic stem cell identity and proper differentiation. This Bos taurus (Bovine) protein is Histone-lysine N-methyltransferase EZH1 (EZH1).